The primary structure comprises 591 residues: CTP synthase 1-B (591 aa).

The Glutamine amidotransferase type-1 domain maps to 300-554; the sequence is SIALVGKYTK…LASVGRLSQY (255 aa). Active-site for GATase activity residues include Cys399, His526, and Glu528. Over residues 562–572 the composition is skewed to basic and acidic residues; it reads SPRDTYSDRSE. A disordered region spans residues 562-581; sequence SPRDTYSDRSENSSPDAEIA.

It belongs to the CTP synthase family.

It catalyses the reaction UTP + L-glutamine + ATP + H2O = CTP + L-glutamate + ADP + phosphate + 2 H(+). It functions in the pathway pyrimidine metabolism; CTP biosynthesis via de novo pathway; CTP from UDP: step 2/2. In terms of biological role, this enzyme is involved in the de novo synthesis of CTP, a precursor of DNA, RNA and phospholipids. Catalyzes the ATP-dependent amination of UTP to CTP with either L-glutamine or ammonia as a source of nitrogen. This chain is CTP synthase 1-B (ctps1-b), found in Xenopus laevis (African clawed frog).